The sequence spans 407 residues: Multifunctional CCA protein (407 aa).

2 residues coordinate ATP: Gly8 and Arg11. CTP contacts are provided by Gly8 and Arg11. Residues Asp21 and Asp23 each coordinate Mg(2+). ATP-binding residues include Arg91, Arg137, and Arg140. CTP is bound by residues Arg91, Arg137, and Arg140. Positions 225 to 326 constitute an HD domain; sequence CGDHVMRVLD…LRLLKDCDAL (102 aa).

This sequence belongs to the tRNA nucleotidyltransferase/poly(A) polymerase family. Bacterial CCA-adding enzyme type 1 subfamily. Monomer. Can also form homodimers and oligomers. It depends on Mg(2+) as a cofactor. The cofactor is Ni(2+).

The enzyme catalyses a tRNA precursor + 2 CTP + ATP = a tRNA with a 3' CCA end + 3 diphosphate. It carries out the reaction a tRNA with a 3' CCA end + 2 CTP + ATP = a tRNA with a 3' CCACCA end + 3 diphosphate. Functionally, catalyzes the addition and repair of the essential 3'-terminal CCA sequence in tRNAs without using a nucleic acid template. Adds these three nucleotides in the order of C, C, and A to the tRNA nucleotide-73, using CTP and ATP as substrates and producing inorganic pyrophosphate. tRNA 3'-terminal CCA addition is required both for tRNA processing and repair. Also involved in tRNA surveillance by mediating tandem CCA addition to generate a CCACCA at the 3' terminus of unstable tRNAs. While stable tRNAs receive only 3'-terminal CCA, unstable tRNAs are marked with CCACCA and rapidly degraded. The protein is Multifunctional CCA protein of Chromobacterium violaceum (strain ATCC 12472 / DSM 30191 / JCM 1249 / CCUG 213 / NBRC 12614 / NCIMB 9131 / NCTC 9757 / MK).